The primary structure comprises 51 residues: Ovomucoid (51 aa).

One can recognise a Kazal-like domain in the interval 1 to 49; sequence VDCSEYPQPACTTERRPVCGSNNKTYSNKCNFCNAVVKSNGTLTVSHFG. Disulfide bonds link cysteine 3–cysteine 33, cysteine 11–cysteine 30, and cysteine 19–cysteine 51. An N-linked (GlcNAc...) asparagine glycan is attached at asparagine 40.

It localises to the secreted. The sequence is that of Ovomucoid from Polyplectron napoleonis (Palawan peacock-pheasant).